Here is a 250-residue protein sequence, read N- to C-terminus: UPF0758 protein tlr1707 (250 aa).

The MPN domain maps to 116–239 (TIIDSPALAA…YQSLREITPL (124 aa)). Zn(2+) contacts are provided by His-188, His-190, and Asp-201. Positions 188-201 (HNHPSGNLSPSQAD) match the JAMM motif motif.

It belongs to the UPF0758 family.

The polypeptide is UPF0758 protein tlr1707 (Thermosynechococcus vestitus (strain NIES-2133 / IAM M-273 / BP-1)).